A 116-amino-acid chain; its full sequence is U16-barytoxin-Tl1a (116 aa).

The N-terminal stretch at 1–20 (MKTIIVFLSLLVLATKFGDA) is a signal peptide. A propeptide spanning residues 21 to 74 (KEGVNQEQKKEVTQNEFRVEYLNEMAAMSLLQQLEAIESALFEKEAGRNSRQKR) is cleaved from the precursor. 3 disulfide bridges follow: Cys75–Cys90, Cys82–Cys95, and Cys89–Cys110.

The protein belongs to the neurotoxin 14 (magi-1) family. 06 (ICK-Trit) subfamily. As to expression, expressed by the venom gland.

It localises to the secreted. Its function is as follows. Ion channel inhibitor. The chain is U16-barytoxin-Tl1a from Trittame loki (Brush-footed trapdoor spider).